Consider the following 382-residue polypeptide: uncharacterized protein (382 aa).

12 helical membrane passes run G14–A34, V45–I65, F79–A99, F102–S122, L131–S151, L157–F177, L204–P224, A235–I255, V270–P290, A291–C311, A325–M345, and F348–L368.

The protein belongs to the major facilitator superfamily. YcaD (TC 2.A.1.26) family.

It is found in the cell inner membrane. This is an uncharacterized protein from Escherichia coli O7:K1 (strain IAI39 / ExPEC).